Consider the following 1013-residue polypeptide: Putative DNA polymerase 060R (1013 aa).

It belongs to the DNA polymerase type-B family.

The enzyme catalyses DNA(n) + a 2'-deoxyribonucleoside 5'-triphosphate = DNA(n+1) + diphosphate. Functionally, DNA-directed DNA polymerase involved in viral DNA replication. This chain is Putative DNA polymerase 060R, found in Dryophytes versicolor (chameleon treefrog).